Consider the following 769-residue polypeptide: Cap-specific mRNA (nucleoside-2'-O-)-methyltransferase 2 (769 aa).

In terms of domain architecture, Adrift-type SAM-dependent 2'-O-MTase spans Glu-109–Gly-322. Residue Lys-117 is part of the active site. S-adenosyl-L-methionine contacts are provided by Gly-148, Trp-167, and Asp-235. Residue Asp-235 is part of the active site. The active-site Proton acceptor is Lys-275.

It localises to the nucleus. The protein localises to the cytoplasm. It catalyses the reaction a 5'-end (N(7)-methyl 5'-triphosphoguanosine)-(2'-O-methyl-ribonucleoside)-(ribonucleotide) in mRNA + S-adenosyl-L-methionine = a 5'-end (N(7)-methyl 5'-triphosphoguanosine)-(2'-O-methyl-ribonucleoside)-(2'-O-methyl-ribonucleotide) in mRNA + S-adenosyl-L-homocysteine + H(+). Functionally, S-adenosyl-L-methionine-dependent methyltransferase that mediates mRNA cap2 2'-O-ribose methylation to the 5'-cap structure of mRNAs. Methylates the ribose of the second nucleotide of a m(7)GpppG-capped mRNA and small nuclear RNA (snRNA) (cap0) to produce m(7)GpppRmpNm (cap2). Recognizes a guanosine cap on RNA independently of its N(7) methylation status. Display cap2 methylation on both cap0 and cap1. Displays a preference for cap1 RNAs. The sequence is that of Cap-specific mRNA (nucleoside-2'-O-)-methyltransferase 2 (CMTR2) from Pongo abelii (Sumatran orangutan).